The following is a 346-amino-acid chain: Phosphoribosylformylglycinamidine cyclo-ligase (346 aa).

It belongs to the AIR synthase family.

It localises to the cytoplasm. The enzyme catalyses 2-formamido-N(1)-(5-O-phospho-beta-D-ribosyl)acetamidine + ATP = 5-amino-1-(5-phospho-beta-D-ribosyl)imidazole + ADP + phosphate + H(+). Its pathway is purine metabolism; IMP biosynthesis via de novo pathway; 5-amino-1-(5-phospho-D-ribosyl)imidazole from N(2)-formyl-N(1)-(5-phospho-D-ribosyl)glycinamide: step 2/2. The polypeptide is Phosphoribosylformylglycinamidine cyclo-ligase (Bacillus velezensis (strain DSM 23117 / BGSC 10A6 / LMG 26770 / FZB42) (Bacillus amyloliquefaciens subsp. plantarum)).